The sequence spans 197 residues: Phosphoheptose isomerase (197 aa).

Positions 37-197 (MLQCLMNDGK…CIDSVLLEGM (161 aa)) constitute an SIS domain. 52–54 (NGG) contributes to the substrate binding site. Zn(2+) is bound by residues His61 and Glu65. Residues Glu65, 94 to 95 (ND), 120 to 122 (STS), Ser125, and Gln175 contribute to the substrate site. Zn(2+)-binding residues include Gln175 and His183.

This sequence belongs to the SIS family. GmhA subfamily. Homotetramer. Requires Zn(2+) as cofactor.

Its subcellular location is the cytoplasm. It catalyses the reaction 2 D-sedoheptulose 7-phosphate = D-glycero-alpha-D-manno-heptose 7-phosphate + D-glycero-beta-D-manno-heptose 7-phosphate. It functions in the pathway carbohydrate biosynthesis; D-glycero-D-manno-heptose 7-phosphate biosynthesis; D-glycero-alpha-D-manno-heptose 7-phosphate and D-glycero-beta-D-manno-heptose 7-phosphate from sedoheptulose 7-phosphate: step 1/1. It participates in bacterial outer membrane biogenesis; LOS core biosynthesis. Functionally, catalyzes the isomerization of sedoheptulose 7-phosphate in D-glycero-D-manno-heptose 7-phosphate. In Neisseria meningitidis serogroup A / serotype 4A (strain DSM 15465 / Z2491), this protein is Phosphoheptose isomerase.